The sequence spans 800 residues: Heterogeneous nuclear ribonucleoprotein U (800 aa).

Ser2 is subject to N-acetylserine. Ser4 is subject to Phosphoserine. The region spanning 8–42 (VKKLKVSELKEELKKRRLSDKGLKADLMDRLQAAL) is the SAP domain. 2 positions are modified to N6-acetyllysine: Lys17 and Lys21. The disordered stretch occupies residues 41 to 257 (ALDNEAGGRP…PQPPVEEEDE (217 aa)). Ser58 carries the phosphoserine modification. Low complexity-rich tracts occupy residues 71 to 80 (AGLEQEAAAG) and 103 to 113 (ENGAAGAADAG). Composition is skewed to acidic residues over residues 114–128 (AMEE…ENGD) and 134–147 (EGED…EGAG). Over residues 153 to 173 (GEQQSQPPAAAAQQQPSQQRG) the composition is skewed to low complexity. Lys181 carries the N6-acetyllysine modification. Ser182 bears the ADP-ribosylserine mark. The span at 194–205 (APPGARQGQQQA) shows a compositional bias: low complexity. Basic and acidic residues predominate over residues 209 to 242 (GKTEQKGGDKKRGVKRPREDHGRGYFEYIEENKY). At Arg231 the chain carries Citrulline. N6-acetyllysine; alternate is present on Lys241. Lys241 is covalently cross-linked (Glycyl lysine isopeptide (Lys-Gly) (interchain with G-Cter in SUMO1); alternate). A Glycyl lysine isopeptide (Lys-Gly) (interchain with G-Cter in SUMO2); alternate cross-link involves residue Lys241. At Tyr242 the chain carries Phosphotyrosine. Ser243 and Ser247 each carry phosphoserine. The B30.2/SPRY domain occupies 244–440 (RAKSPQPPVE…VEFNFGQKEK (197 aa)). Thr262 carries the post-translational modification Phosphothreonine. Lys328 bears the N6-acetyllysine mark. Positions 464 to 648 (PKGPEEKKDC…QKLLEQYKEE (185 aa)) are ATPase domain. Lys471 is covalently cross-linked (Glycyl lysine isopeptide (Lys-Gly) (interchain with G-Cter in SUMO2)). Residue 480–487 (GLPGAGKT) participates in ATP binding. Lys492 and Lys500 each carry N6-acetyllysine; alternate. Residues Lys492 and Lys500 each participate in a glycyl lysine isopeptide (Lys-Gly) (interchain with G-Cter in SUMO2); alternate cross-link. Thr508 is subject to Phosphothreonine. Lys512 participates in a covalent cross-link: Glycyl lysine isopeptide (Lys-Gly) (interchain with G-Cter in SUMO2). Lys527 is subject to N6-acetyllysine. Lys541 carries the N6-acetyllysine; alternate modification. Residue Lys541 forms a Glycyl lysine isopeptide (Lys-Gly) (interchain with G-Cter in SUMO2); alternate linkage. Residue Lys550 forms a Glycyl lysine isopeptide (Lys-Gly) (interchain with G-Cter in SUMO2) linkage. Thr558 is subject to Phosphothreonine. Residues Lys585 and Lys602 each participate in a glycyl lysine isopeptide (Lys-Gly) (interchain with G-Cter in SUMO2) cross-link. The interval 587-602 (EDYKQRTQKKAEVEGK) is actin-binding. Lys611 is subject to N6-acetyllysine; alternate. Lys611 participates in a covalent cross-link: Glycyl lysine isopeptide (Lys-Gly) (interchain with G-Cter in SUMO2); alternate. Residues 626–653 (DEITYVELQKEEAQKLLEQYKEESKKAL) are a coiled coil. Glycyl lysine isopeptide (Lys-Gly) (interchain with G-Cter in SUMO2) cross-links involve residues Lys640 and Lys646. The segment covering 647-659 (EESKKALPPEKKQ) has biased composition (basic and acidic residues). The segment at 647–729 (EESKKALPPE…GSGGIGYPYP (83 aa)) is disordered. Arg678 carries the post-translational modification Omega-N-methylarginine. Positions 686 to 704 (GGFNMRGGNFRGGAPGNRG) are enriched in gly residues. Positions 690 to 715 (MRGGNFRGGAPGNRGGYNRRGNMPQR) are RNA-binding RGG-box. An asymmetric dimethylarginine mark is found at Arg691, Arg696, and Arg703. An asymmetric dimethylarginine; alternate mark is found at Arg709 and Arg715. Omega-N-methylarginine; alternate occurs at positions 709 and 715. Over residues 715–725 (RGGGGGSGGIG) the composition is skewed to gly residues. An asymmetric dimethylarginine mark is found at Arg730 and Arg737. The tract at residues 745–774 (NYNRGGMPNRGNYNQNFRGRGNNRGYKNQS) is disordered. Position 789 is an N6-acetyllysine; alternate (Lys789). Lys789 participates in a covalent cross-link: Glycyl lysine isopeptide (Lys-Gly) (interchain with G-Cter in SUMO2); alternate.

In terms of assembly, oligomer (via ATPase domain and RNA-binding RGG-box region); oligomerization occurs upon ATP-binding in a chromatin-associated RNAs (caRNAs)- and transcription-dependent manner and is required for chromatin decompaction. ATP hydrolysis is required to cycle from an oligomeric to monomeric state to compact chromatin. Component of the coding region determinant (CRD)-mediated complex, composed of DHX9, HNRNPU, IGF2BP1, SYNCRIP and YBX1. Identified in the spliceosome C complex. Identified in a IGF2BP1-dependent mRNP granule complex containing untranslated mRNAs. Associates with heterogeneous nuclear ribonucleoprotein (hnRNP) particles. Associates (via middle region) with the C-terminal domain (CTD) RNA polymerase II (Pol II) holoenzyme; this association occurs in a RNA-independent manner. Associates (via middle region) with the core-TFIIH basal transcription factor complex; this association inhibits the CTD phosphorylation of RNA polymerase II holoenzyme by down-regulating TFIIH kinase activity. Associates with the telomerase holoenzyme complex. Associates with spindle microtubules (MTs) in a TPX2-dependent manner. Interacts (via C-terminus) with actin; this interaction is direct and mediates association with the phosphorylated CTD of RNA polymerase II and is disrupted in presence of the long non-coding H19 RNA. Interacts with AURKA. Interacts (via C-terminus) with CBX5; this interaction is, at least in part, RNA-dependent. Interacts with CR2. Interacts with CRY1. Interacts (via C-terminus) with EP300; this interaction enhances DNA-binding to nuclear scaffold/matrix attachment region (S/MAR) elements. Interacts with ERBB4. Interacts with GEMIN5. Interacts with IGF2BP1. Interacts with IGF2BP2 and IGF2BP3. Interacts with NCL; this interaction occurs during mitosis. Interacts (via C-terminus) with NR3C1 (via C-terminus). Interacts with PLK1; this interaction induces phosphorylation of HNRNPU at Ser-58 in mitosis. Interacts with POU3F4. Interacts with SMARCA4; this interaction occurs in embryonic stem cells and stimulates global Pol II-mediated transcription. Interacts (via C-terminus) with TOP2A; this interaction protects the topoisomerase TOP2A from degradation and positively regulates the relaxation of supercoiled DNA by TOP2A in a RNA-dependent manner. Interacts with TPX2; this interaction recruits HNRNPU to spindle microtubules (MTs). Interacts with UBQLN2. Interacts (via RNA-binding RGG-box region) with ZBTB7B; the interaction facilitates the recruitment of long non-coding RNA Blnc1 by ZBTB7B. Interacts with ERCC6. In terms of processing, cleaved at Asp-94 by CASP3 during T-cell apoptosis, resulting in a loss of DNA- and chromatin-binding activities. Post-translationally, extensively phosphorylated. Phosphorylated on Ser-58 by PLK1 and dephosphorylated by protein phosphatase 2A (PP2A) in mitosis. Arg-709 and Arg-715 are dimethylated, probably to asymmetric dimethylarginine. In terms of processing, citrullinated by PADI4.

The protein localises to the nucleus. It is found in the nucleus matrix. Its subcellular location is the chromosome. It localises to the nucleus speckle. The protein resides in the cytoplasm. The protein localises to the cytoskeleton. It is found in the microtubule organizing center. Its subcellular location is the centrosome. It localises to the centromere. The protein resides in the kinetochore. The protein localises to the spindle. It is found in the spindle pole. Its subcellular location is the midbody. It localises to the cell surface. The protein resides in the cytoplasmic granule. In terms of biological role, DNA- and RNA-binding protein involved in several cellular processes such as nuclear chromatin organization, telomere-length regulation, transcription, mRNA alternative splicing and stability, Xist-mediated transcriptional silencing and mitotic cell progression. Plays a role in the regulation of interphase large-scale gene-rich chromatin organization through chromatin-associated RNAs (caRNAs) in a transcription-dependent manner, and thereby maintains genomic stability. Required for the localization of the long non-coding Xist RNA on the inactive chromosome X (Xi) and the subsequent initiation and maintenance of X-linked transcriptional gene silencing during X-inactivation. Plays a role as a RNA polymerase II (Pol II) holoenzyme transcription regulator. Promotes transcription initiation by direct association with the core-TFIIH basal transcription factor complex for the assembly of a functional pre-initiation complex with Pol II in a actin-dependent manner. Blocks Pol II transcription elongation activity by inhibiting the C-terminal domain (CTD) phosphorylation of Pol II and dissociates from Pol II pre-initiation complex prior to productive transcription elongation. Positively regulates CBX5-induced transcriptional gene silencing and retention of CBX5 in the nucleus. Negatively regulates glucocorticoid-mediated transcriptional activation. Key regulator of transcription initiation and elongation in embryonic stem cells upon leukemia inhibitory factor (LIF) signaling. Involved in the long non-coding RNA H19-mediated Pol II transcriptional repression. Participates in the circadian regulation of the core clock component BMAL1 transcription. Plays a role in the regulation of telomere length. Plays a role as a global pre-mRNA alternative splicing modulator by regulating U2 small nuclear ribonucleoprotein (snRNP) biogenesis. Plays a role in mRNA stability. Component of the CRD-mediated complex that promotes MYC mRNA stabilization. Enhances the expression of specific genes, such as tumor necrosis factor TNFA, by regulating mRNA stability, possibly through binding to the 3'-untranslated region (UTR). Plays a role in mitotic cell cycle regulation. Involved in the formation of stable mitotic spindle microtubules (MTs) attachment to kinetochore, spindle organization and chromosome congression. Phosphorylation at Ser-58 by PLK1 is required for chromosome alignement and segregation and progression through mitosis. Also contributes to the targeting of AURKA to mitotic spindle MTs. Binds to double- and single-stranded DNA and RNA, poly(A), poly(C) and poly(G) oligoribonucleotides. Binds to chromatin-associated RNAs (caRNAs). Associates with chromatin to scaffold/matrix attachment region (S/MAR) elements in a chromatin-associated RNAs (caRNAs)-dependent manner. Binds (via RNA-binding RGG-box region) to the long non-coding Xist RNA; this binding is direct and bridges the Xist RNA and the inactive chromosome X (Xi). Binds the long non-coding H19 RNA. Binds to SMN1/2 pre-mRNAs at G/U-rich regions. Binds to small nuclear RNAs (snRNAs). Binds to the 3'-UTR of TNFA mRNA. Also negatively regulates embryonic stem cell differentiation upon LIF signaling. Required for embryonic development. Binds to brown fat long non-coding RNA 1 (Blnc1); facilitates the recruitment of Blnc1 by ZBTB7B required to drive brown and beige fat development and thermogenesis. The protein is Heterogeneous nuclear ribonucleoprotein U of Mus musculus (Mouse).